Reading from the N-terminus, the 328-residue chain is Zinc chaperone YeiR (328 aa).

9–17 (GFLGSGKTT) lines the GTP pocket. Positions 63–66 (CMCC) match the CXCC motif motif. A GTP-binding site is contributed by Asp155. In terms of domain architecture, CobW C-terminal spans 241 to 321 (CGWIFDADTV…WNALQSALLK (81 aa)).

Belongs to the SIMIBI class G3E GTPase family. ZNG1 subfamily. In terms of assembly, oligomerizes in the presence of Zn(2+).

The catalysed reaction is GTP + H2O = GDP + phosphate + H(+). GTPase activity is enhanced by Zn(2+) binding. Functionally, zinc chaperone that directly transfers zinc cofactor to target proteins, thereby activating them. Zinc is transferred from the CXCC motif in the GTPase domain to the zinc binding site in target proteins in a process requiring GTP hydrolysis. This is Zinc chaperone YeiR (yeiR) from Escherichia coli (strain K12).